A 111-amino-acid polypeptide reads, in one-letter code: BET1-like protein (111 aa).

At 1–86 the chain is on the cytoplasmic side; it reads MADWARAQSP…MARSGRDNRK (86 aa). 2 positions are modified to phosphoserine: S9 and S37. Residues 15 to 77 enclose the t-SNARE coiled-coil homology domain; it reads EILDRENKRM…TGSVKRFSTM (63 aa). A helical; Anchor for type IV membrane protein membrane pass occupies residues 87–107; it reads LLCGVAVGLIVAFFILSYLLS. The Lumenal portion of the chain corresponds to 108 to 111; the sequence is RART.

In terms of assembly, component of a SNARE complex consisting of STX5, YKT6, GOSR1 and BET1L. Interacts with STX5.

It localises to the golgi apparatus membrane. Its subcellular location is the golgi apparatus. It is found in the trans-Golgi network membrane. Vesicle SNARE required for targeting and fusion of retrograde transport vesicles with the Golgi complex. Required for the integrity of the Golgi complex. The polypeptide is BET1-like protein (Bos taurus (Bovine)).